Here is a 220-residue protein sequence, read N- to C-terminus: Probable cytidylate kinase (220 aa).

10-18 is a binding site for ATP; it reads GPAASGKSS.

This sequence belongs to the cytidylate kinase family. Type 1 subfamily.

It catalyses the reaction CMP + ATP = CDP + ADP. It carries out the reaction dCMP + ATP = dCDP + ADP. The chain is Probable cytidylate kinase from Encephalitozoon cuniculi (strain GB-M1) (Microsporidian parasite).